Reading from the N-terminus, the 187-residue chain is Putative adenylate kinase (187 aa).

ATP contacts are provided by G10, G12, K13, T14, and I15. The tract at residues S30–I53 is NMP. Residues G103–E113 form an LID region. R104 contacts ATP.

It belongs to the adenylate kinase family. AK6 subfamily. Interacts with uS11. Not a structural component of 40S pre-ribosomes, but transiently interacts with them by binding to uS11.

The catalysed reaction is AMP + ATP = 2 ADP. It catalyses the reaction ATP + H2O = ADP + phosphate + H(+). In terms of biological role, broad-specificity nucleoside monophosphate (NMP) kinase that catalyzes the reversible transfer of the terminal phosphate group between nucleoside triphosphates and monophosphates. Also has ATPase activity. Involved in the late maturation steps of the 30S ribosomal particles, specifically 16S rRNA maturation. While NMP activity is not required for ribosome maturation, ATPase activity is. Associates transiently with small ribosomal subunit protein uS11. ATP hydrolysis breaks the interaction with uS11. May temporarily remove uS11 from the ribosome to enable a conformational change of the ribosomal RNA that is needed for the final maturation step of the small ribosomal subunit. The polypeptide is Putative adenylate kinase (Saccharolobus islandicus (strain L.S.2.15 / Lassen #1) (Sulfolobus islandicus)).